Here is a 557-residue protein sequence, read N- to C-terminus: Phosphoribosylaminoimidazole carboxylase, chloroplastic (557 aa).

In terms of domain architecture, ATP-grasp spans 108–293; the sequence is KVALLPAWIP…QFEQHLPAVV (186 aa). Position 132–189 (132–189) interacts with ATP; sequence WDSLDIHFMIKSRRLAYDGRGNFVAKSEEELSSAVDALGGFDRGLYAEKWAPFVKELA. The tract at residues 387 to 557 is AIR carboxylase catalytic subunit; the sequence is CSTLLGFIMG…HGWESYLKNS (171 aa).

It in the C-terminal section; belongs to the AIR carboxylase family. Class I subfamily.

It is found in the plastid. The protein resides in the chloroplast. It catalyses the reaction 5-amino-1-(5-phospho-D-ribosyl)imidazole-4-carboxylate + H(+) = 5-amino-1-(5-phospho-beta-D-ribosyl)imidazole + CO2. The protein operates within purine metabolism; IMP biosynthesis via de novo pathway; 5-amino-1-(5-phospho-D-ribosyl)imidazole-4-carboxylate from 5-amino-1-(5-phospho-D-ribosyl)imidazole (carboxylase route): step 1/1. This chain is Phosphoribosylaminoimidazole carboxylase, chloroplastic (PURKE), found in Vigna aconitifolia (Moth bean).